The sequence spans 377 residues: Putative glutamate--cysteine ligase 2 (377 aa).

It belongs to the glutamate--cysteine ligase type 2 family. YbdK subfamily.

It carries out the reaction L-cysteine + L-glutamate + ATP = gamma-L-glutamyl-L-cysteine + ADP + phosphate + H(+). In terms of biological role, ATP-dependent carboxylate-amine ligase which exhibits weak glutamate--cysteine ligase activity. The polypeptide is Putative glutamate--cysteine ligase 2 (Pseudomonas aeruginosa (strain LESB58)).